A 469-amino-acid polypeptide reads, in one-letter code: Tubulin gamma-2 chain (469 aa).

142–148 (AGGTGSG) is a binding site for GTP.

This sequence belongs to the tubulin family.

Its subcellular location is the cytoplasm. The protein resides in the cytoskeleton. It localises to the microtubule organizing center. Its function is as follows. Tubulin is the major constituent of microtubules. The gamma chain is found at microtubule organizing centers (MTOC) such as the spindle poles, suggesting that it is involved in the minus-end nucleation of microtubule assembly. The polypeptide is Tubulin gamma-2 chain (TUBG2) (Oryza sativa subsp. japonica (Rice)).